Reading from the N-terminus, the 255-residue chain is MPLELVTVPCLSDNYAFLVHDAASGETAVVDVPEAGPVMAALAERNWRLTQILLTHHHGDHVAGVAALREATGARVAGAAADAHRLPPLDLALAEGDRVRIGSEDGTVLEVPGHTVGHIAFHFADSGLAFTGDSLMAMGCGRLFEGTPRMMWQSLRKLSALPADTLICSGHEYTQANARFACTLEPENPVLIFRVGSIAAARKEGRPTVPSQLSDEIATNPFLRAGEAALKAAVGMADAEDAEVFAEIRRRKDNF.

The Zn(2+) site is built by histidine 56, histidine 58, aspartate 60, histidine 61, histidine 114, aspartate 133, and histidine 171.

This sequence belongs to the metallo-beta-lactamase superfamily. Glyoxalase II family. In terms of assembly, monomer. The cofactor is Zn(2+).

It catalyses the reaction an S-(2-hydroxyacyl)glutathione + H2O = a 2-hydroxy carboxylate + glutathione + H(+). Its pathway is secondary metabolite metabolism; methylglyoxal degradation; (R)-lactate from methylglyoxal: step 2/2. Functionally, thiolesterase that catalyzes the hydrolysis of S-D-lactoyl-glutathione to form glutathione and D-lactic acid. This is Hydroxyacylglutathione hydrolase from Cereibacter sphaeroides (strain ATCC 17025 / ATH 2.4.3) (Rhodobacter sphaeroides).